A 29-amino-acid polypeptide reads, in one-letter code: Conotoxin SIVC (29 aa).

Residue A1 is modified to N-acetylalanine; partial. P2 bears the 4-hydroxyproline mark. O-linked (HexNAc...) threonine glycosylation is found at T7 and T9. 4-hydroxyproline is present on residues P18 and P22. C29 carries the cysteine amide modification.

It belongs to the conotoxin A superfamily. O-linked glycans consist of Hex4-HexNAc2 hexasaccharides. Post-translationally, N-terminus is found to be free and N-acetylated, depending on the fraction studied. In terms of processing, contains 3 disulfide bonds. Expressed by the venom duct. Low expression in the distal venom duct sections.

The protein resides in the secreted. In terms of biological role, probable neurotoxin with ion channel inhibitor activity. The chain is Conotoxin SIVC from Conus striatus (Striated cone).